Here is a 397-residue protein sequence, read N- to C-terminus: tRNA-specific 2-thiouridylase MnmA (397 aa).

ATP-binding positions include alanine 19–serine 26 and leucine 45. The active-site Nucleophile is the cysteine 113. Residues cysteine 113 and cysteine 210 are joined by a disulfide bond. An ATP-binding site is contributed by glycine 137. The interaction with tRNA stretch occupies residues arginine 160 to glutamine 162. The active-site Cysteine persulfide intermediate is the cysteine 210.

Belongs to the MnmA/TRMU family.

The protein resides in the cytoplasm. It catalyses the reaction S-sulfanyl-L-cysteinyl-[protein] + uridine(34) in tRNA + AH2 + ATP = 2-thiouridine(34) in tRNA + L-cysteinyl-[protein] + A + AMP + diphosphate + H(+). Catalyzes the 2-thiolation of uridine at the wobble position (U34) of tRNA, leading to the formation of s(2)U34. The protein is tRNA-specific 2-thiouridylase MnmA of Bradyrhizobium sp. (strain ORS 278).